The sequence spans 488 residues: UDP-N-acetylmuramoyl-L-alanyl-D-glutamate--2,6-diaminopimelate ligase (488 aa).

S29 is a UDP-N-acetyl-alpha-D-muramoyl-L-alanyl-D-glutamate binding site. 108 to 114 (GTSGKTS) serves as a coordination point for ATP. Residues 150-151 (TT), S177, Q183, and R185 contribute to the UDP-N-acetyl-alpha-D-muramoyl-L-alanyl-D-glutamate site. Residue K217 is modified to N6-carboxylysine. Residues R381, 405–408 (DNPR), G453, and E457 contribute to the meso-2,6-diaminopimelate site. The short motif at 405-408 (DNPR) is the Meso-diaminopimelate recognition motif element.

Belongs to the MurCDEF family. MurE subfamily. Requires Mg(2+) as cofactor. Post-translationally, carboxylation is probably crucial for Mg(2+) binding and, consequently, for the gamma-phosphate positioning of ATP.

It is found in the cytoplasm. It carries out the reaction UDP-N-acetyl-alpha-D-muramoyl-L-alanyl-D-glutamate + meso-2,6-diaminopimelate + ATP = UDP-N-acetyl-alpha-D-muramoyl-L-alanyl-gamma-D-glutamyl-meso-2,6-diaminopimelate + ADP + phosphate + H(+). It functions in the pathway cell wall biogenesis; peptidoglycan biosynthesis. Its function is as follows. Catalyzes the addition of meso-diaminopimelic acid to the nucleotide precursor UDP-N-acetylmuramoyl-L-alanyl-D-glutamate (UMAG) in the biosynthesis of bacterial cell-wall peptidoglycan. The chain is UDP-N-acetylmuramoyl-L-alanyl-D-glutamate--2,6-diaminopimelate ligase from Brucella melitensis biotype 1 (strain ATCC 23456 / CCUG 17765 / NCTC 10094 / 16M).